Here is a 245-residue protein sequence, read N- to C-terminus: 1-(5-phosphoribosyl)-5-[(5-phosphoribosylamino)methylideneamino] imidazole-4-carboxamide isomerase (245 aa).

The Proton acceptor role is filled by Asp-8. The active-site Proton donor is the Asp-130.

It belongs to the HisA/HisF family.

The protein resides in the cytoplasm. The enzyme catalyses 1-(5-phospho-beta-D-ribosyl)-5-[(5-phospho-beta-D-ribosylamino)methylideneamino]imidazole-4-carboxamide = 5-[(5-phospho-1-deoxy-D-ribulos-1-ylimino)methylamino]-1-(5-phospho-beta-D-ribosyl)imidazole-4-carboxamide. Its pathway is amino-acid biosynthesis; L-histidine biosynthesis; L-histidine from 5-phospho-alpha-D-ribose 1-diphosphate: step 4/9. This is 1-(5-phosphoribosyl)-5-[(5-phosphoribosylamino)methylideneamino] imidazole-4-carboxamide isomerase from Azotobacter vinelandii (strain DJ / ATCC BAA-1303).